The following is a 610-amino-acid chain: UvrABC system protein C (610 aa).

The GIY-YIG domain occupies 16-94; that stretch reads SQPGVYSMYD…IKLYQPRYNV (79 aa). A UVR domain is found at 204-239; that stretch reads QQVLNQLVERMELASRALNFEDAAHARDQIQAVRRV.

Belongs to the UvrC family. As to quaternary structure, interacts with UvrB in an incision complex.

Its subcellular location is the cytoplasm. Functionally, the UvrABC repair system catalyzes the recognition and processing of DNA lesions. UvrC both incises the 5' and 3' sides of the lesion. The N-terminal half is responsible for the 3' incision and the C-terminal half is responsible for the 5' incision. This is UvrABC system protein C from Sodalis glossinidius (strain morsitans).